Consider the following 220-residue polypeptide: MKRSASDSPLLFDLPLAPDFSQEQQLMKRGLKHIAGIDEAGRGPLAGPVVAAAVVLDQNDLPEGLDDSKRLTAARREALYEIILTKAITVSVASLSARSIDASDIRKAALEAMRRAVIGLTLKPCHALVDGRDVPPGLSCPGSALVKGDQRSVSIAAASIVAKVTRDRMMIRAGAAHPPYGLEIHAGYATQKHRAAIESEGPVPGLHRYTFAPIKGRFDC.

Residues 32-220 (KHIAGIDEAG…FAPIKGRFDC (189 aa)) form the RNase H type-2 domain. Positions 38, 39, and 130 each coordinate a divalent metal cation.

This sequence belongs to the RNase HII family. The cofactor is Mn(2+). Requires Mg(2+) as cofactor.

It localises to the cytoplasm. The enzyme catalyses Endonucleolytic cleavage to 5'-phosphomonoester.. In terms of biological role, endonuclease that specifically degrades the RNA of RNA-DNA hybrids. In Brucella ovis (strain ATCC 25840 / 63/290 / NCTC 10512), this protein is Ribonuclease HII.